We begin with the raw amino-acid sequence, 857 residues long: Aminopeptidase N (857 aa).

Residues E130 and 264–268 (GAMEN) contribute to the substrate site. Residue H298 participates in Zn(2+) binding. E299 functions as the Proton acceptor in the catalytic mechanism. 2 residues coordinate Zn(2+): H302 and E321.

It belongs to the peptidase M1 family. In terms of assembly, monomer. The cofactor is Zn(2+). In terms of processing, the N-terminus is blocked.

Its subcellular location is the cytoplasm. It catalyses the reaction Release of an N-terminal amino acid, Xaa-|-Yaa- from a peptide, amide or arylamide. Xaa is preferably Ala, but may be most amino acids including Pro (slow action). When a terminal hydrophobic residue is followed by a prolyl residue, the two may be released as an intact Xaa-Pro dipeptide.. Aminopeptidase with broad substrate specificity to several peptides. Shows strong preference for leucine but also cleaves next to Arg and Lys in peptide-bond-containing substrates. In Streptomyces lividans, this protein is Aminopeptidase N (pepN).